Reading from the N-terminus, the 184-residue chain is Late embryogenesis abundant protein (184 aa).

The tract at residues 49 to 184 (TGNIAEYPTE…KLPGHHNHHP (136 aa)) is disordered. The span at 60–86 (PPAGVAAGTGAAATTAAGVTTSETTTG) shows a compositional bias: low complexity. Composition is skewed to basic and acidic residues over residues 87–98 (QEHHGSLGEHLR) and 122–138 (KDKIKDKLGGGKHKDEQ). Low complexity predominate over residues 139–159 (TPTTATTTGPTTTTTTTGAAA). The segment covering 160–177 (DQHHEKKGILEKIKEKLP) has biased composition (basic and acidic residues).

Belongs to the plant dehydrin family.

In terms of biological role, LEA protein are late embryogenesis abundant in higher plant seed embryos. There are two subsets of LEA proteins (5a, and 5b), the first ones are expressed when the cotyledon weight reach 80 mg and the second set are expressed above 100 mg. The function of those proteins is not known. This Raphanus sativus (Radish) protein is Late embryogenesis abundant protein.